The sequence spans 507 residues: MGQVVTFLQSLPEVINEAINIALIAISIICILKGLVNFWKCGVVQLAIFLCLAGRKCDGLMIDRRHELSHVELNLTRMFDNLPQSCSKNNTHHYYKGPKGTTWGIELTLTNTSLDSYANMSRIRSLAFGNITNCDKTGEAGHTLKWLLNELHFNVLHVTRHVGARCRVSEGAGLLIQYNLTIGDHGGEVGRHLIASLAQIIGDNKAAWVGKCDSHCTMDGKCNYTNCEGFTHYNYLIIQNTTWENHCSYSPMSTIRMALNKVAYSSVSRQLLGFFTWDISDSSGAHVPGGYCLEQWAIVWAGIKCFDNAVMAKCNKDHNVEFCDTMRLFDFNQNAIKTLQLNVENSVNLLKRSINGLISDSLVIRNSLKQLAKIPYCNYTKFWYVNDTITGKHSLPQCWLMRNGSYLNETHFKNEWLWESQNLYNEMLLKEYEDRQGKTPIALTDICFWSLVFFTSTVFLQLVGIPTHRHLVGEGCPKPHRITSNSLCACGYYKIPKRPTRWVRKGK.

A lipid anchor (N-myristoyl glycine; by host) is attached at glycine 2. The Extracellular segment spans residues 2–17 (GQVVTFLQSLPEVINE). The helical transmembrane segment at 18–33 (AINIALIAISIICILK) threads the bilayer. Over 34-58 (GLVNFWKCGVVQLAIFLCLAGRKCD) the chain is Cytoplasmic. Residue cysteine 57 coordinates Zn(2+). The Extracellular portion of the chain corresponds to 59–445 (GLMIDRRHEL…QGKTPIALTD (387 aa)). Cystine bridges form between cysteine 86–cysteine 247, cysteine 292–cysteine 305, cysteine 314–cysteine 323, and cysteine 377–cysteine 398. 4 N-linked (GlcNAc...) asparagine; by host glycosylation sites follow: asparagine 89, asparagine 111, asparagine 179, and asparagine 240. Residues asparagine 378, asparagine 386, asparagine 403, and asparagine 408 are each glycosylated (N-linked (GlcNAc...) asparagine; by host). The helical transmembrane segment at 446–466 (ICFWSLVFFTSTVFLQLVGIP) threads the bilayer. The Cytoplasmic segment spans residues 467-507 (THRHLVGEGCPKPHRITSNSLCACGYYKIPKRPTRWVRKGK). 6 residues coordinate Zn(2+): histidine 468, histidine 470, cysteine 476, histidine 480, cysteine 488, and cysteine 490.

The protein belongs to the arenaviridae GPC protein family. In terms of assembly, interacts with glycoprotein G2. Part of the GP complex (GP-C) together with glycoprotein G1 and glycoprotein G2. The GP-complex interacts with protein Z, which interacts with ribonucleocapsid; these interactions may induce virion budding. As to quaternary structure, homotrimer; disulfide-linked. In pre-fusion state, G1 homotrimers bind G2 homotrimers via ionic interactions. Part of the GP complex (GP-C) together with glycoprotein G2 and the stable signal peptide. The GP-complex interacts with protein Z, which interacts with ribonucleocapsid; these interactions may induce virion budding. Homotrimer. Interacts with the stable signal peptide. In pre-fusion state, G2 homotrimers bind G1 homotrimers via ionic interactions. Part of the GP complex (GP-C) together with glycoprotein G1 and the stable signal peptide. Acidification in the endosome triggers rearrangements, which ultimately leads to a 6 helix bundle formed by the two heptad repeat domains (HR1 and HR2) in post-fusion state. The GP-complex interacts with protein Z, which interacts with ribonucleocapsid; these interactions may induce virion budding. Specific enzymatic cleavages in vivo yield mature proteins. GP-C polyprotein is cleaved in the endoplasmic reticulum by the host protease MBTPS1. Only cleaved glycoprotein is incorporated into virions. Post-translationally, the SSP remains stably associated with the GP complex following cleavage by signal peptidase and plays crucial roles in the trafficking of GP through the secretory pathway. In terms of processing, myristoylation is necessary for GP2-mediated fusion activity.

It is found in the virion membrane. The protein localises to the host endoplasmic reticulum membrane. The protein resides in the host Golgi apparatus membrane. It localises to the host cell membrane. In terms of biological role, functions as a cleaved signal peptide that is retained as the third component of the GP complex (GP-C). Helps to stabilize the spike complex in its native conformation. The SSP is required for efficient glycoprotein expression, post-translational maturation cleavage of G1 and G2, glycoprotein transport to the cell surface plasma membrane, formation of infectious virus particles, and acid pH-dependent glycoprotein-mediated cell fusion. Its function is as follows. Forms the virion spikes together with glycoprotein G2. The glycoprotein spike trimers are connected to the underlying matrix. Interacts with the host receptor leading to virus endocytosis. Forms the virion spikes together with glycoprotein G1. The glycoprotein spike trimers are connected to the underlying matrix. Class I viral fusion protein that directs fusion of viral and host endosomal membranes, leading to delivery of the nucleocapsid into the cytoplasm. Membrane fusion is mediated by irreversible conformational changes induced by acidification. The protein is Pre-glycoprotein polyprotein GP complex of Allpahuayo mammarenavirus (isolate Rat/Peru/CLHP-2472/1997) (ALLV).